Here is a 61-residue protein sequence, read N- to C-terminus: MSEKACRHCHYITSEDRCPVCGSRDLSEEWFDLVIIVDVENSEIAKKIGAKVPGKYAIRVR.

Zn(2+) is bound by residues Cys-6, Cys-9, Cys-18, and Cys-21.

This sequence belongs to the archaeal Spt4 family. As to quaternary structure, heterodimer composed of Spt4 and Spt5.

In terms of biological role, stimulates transcription elongation. This is Transcription elongation factor Spt4 from Pyrococcus furiosus (strain ATCC 43587 / DSM 3638 / JCM 8422 / Vc1).